A 434-amino-acid chain; its full sequence is Gamma-enolase (434 aa).

Serine 2 carries the N-acetylserine modification. Lysine 5 is modified (N6-acetyllysine). At threonine 26 the chain carries Phosphothreonine. Serine 40 provides a ligand contact to Mg(2+). Phosphotyrosine is present on tyrosine 44. N6-acetyllysine; alternate is present on lysine 60. Lysine 60 carries the N6-succinyllysine; alternate modification. The residue at position 64 (lysine 64) is an N6-acetyllysine. Lysine 89 is modified (N6-acetyllysine; alternate). Position 89 is an N6-succinyllysine; alternate (lysine 89). Residues histidine 158 and glutamate 167 each contribute to the substrate site. Lysine 193, lysine 197, and lysine 199 each carry N6-acetyllysine. N6-acetyllysine; alternate is present on lysine 202. Lysine 202 is covalently cross-linked (Glycyl lysine isopeptide (Lys-Gly) (interchain with G-Cter in SUMO2); alternate). Residue glutamate 210 is the Proton donor of the active site. N6-acetyllysine; alternate is present on residues lysine 228 and lysine 233. The residue at position 228 (lysine 228) is an N6-succinyllysine; alternate. Position 233 is an N6-(2-hydroxyisobutyryl)lysine; alternate (lysine 233). A Mg(2+)-binding site is contributed by aspartate 245. N6-acetyllysine is present on lysine 256. A Phosphoserine modification is found at serine 263. Tyrosine 287 is modified (phosphotyrosine). Serine 291 carries the phosphoserine modification. Positions 293 and 318 each coordinate Mg(2+). Residues glutamate 293 and aspartate 318 each contribute to the substrate site. N6-acetyllysine is present on residues lysine 335 and lysine 343. Lysine 343 functions as the Proton acceptor in the catalytic mechanism. Residues 370-373 (SHRS) and lysine 394 contribute to the substrate site. Lysine 406 is modified (N6-acetyllysine).

This sequence belongs to the enolase family. In terms of assembly, mammalian enolase is composed of 3 isozyme subunits, alpha, beta and gamma, which can form homodimers or heterodimers which are cell-type and development-specific. It depends on Mg(2+) as a cofactor. In terms of tissue distribution, the alpha/alpha homodimer is expressed in embryo and in most adult tissues. The alpha/beta heterodimer and the beta/beta homodimer are found in striated muscle, and the alpha/gamma heterodimer and the gamma/gamma homodimer in neurons.

It localises to the cytoplasm. Its subcellular location is the cell membrane. The enzyme catalyses (2R)-2-phosphoglycerate = phosphoenolpyruvate + H2O. It functions in the pathway carbohydrate degradation; glycolysis; pyruvate from D-glyceraldehyde 3-phosphate: step 4/5. Its function is as follows. Has neurotrophic and neuroprotective properties on a broad spectrum of central nervous system (CNS) neurons. Binds, in a calcium-dependent manner, to cultured neocortical neurons and promotes cell survival. The protein is Gamma-enolase (ENO2) of Homo sapiens (Human).